A 140-amino-acid polypeptide reads, in one-letter code: Nucleoside diphosphate kinase (140 aa).

Lys11, Phe59, Arg87, Thr93, Arg104, and Asn114 together coordinate ATP. The active-site Pros-phosphohistidine intermediate is His117.

It belongs to the NDK family. In terms of assembly, homotetramer. Mg(2+) is required as a cofactor.

The protein resides in the cytoplasm. The enzyme catalyses a 2'-deoxyribonucleoside 5'-diphosphate + ATP = a 2'-deoxyribonucleoside 5'-triphosphate + ADP. The catalysed reaction is a ribonucleoside 5'-diphosphate + ATP = a ribonucleoside 5'-triphosphate + ADP. Functionally, major role in the synthesis of nucleoside triphosphates other than ATP. The ATP gamma phosphate is transferred to the NDP beta phosphate via a ping-pong mechanism, using a phosphorylated active-site intermediate. The sequence is that of Nucleoside diphosphate kinase from Brucella melitensis biotype 1 (strain ATCC 23456 / CCUG 17765 / NCTC 10094 / 16M).